Reading from the N-terminus, the 101-residue chain is Small ribosomal subunit protein uS14 (101 aa).

Belongs to the universal ribosomal protein uS14 family. In terms of assembly, part of the 30S ribosomal subunit. Contacts proteins S3 and S10.

Its function is as follows. Binds 16S rRNA, required for the assembly of 30S particles and may also be responsible for determining the conformation of the 16S rRNA at the A site. The polypeptide is Small ribosomal subunit protein uS14 (Kocuria rhizophila (strain ATCC 9341 / DSM 348 / NBRC 103217 / DC2201)).